A 390-amino-acid chain; its full sequence is Protein phosphatase methylesterase 1 (390 aa).

The tract at residues 19-50 (FGLSSLSEDPDESESNSNYFSPTPQPPNELRT) is disordered. Residues 100–332 (PIFICHHGAG…NLIIGQMQGK (233 aa)) enclose the AB hydrolase-1 domain. Active-site residues include Ser-186, Asp-213, and His-346.

It belongs to the AB hydrolase superfamily.

The enzyme catalyses [phosphatase 2A protein]-C-terminal L-leucine methyl ester + H2O = [phosphatase 2A protein]-C-terminal L-leucine + methanol + H(+). In terms of biological role, demethylates proteins that have been reversibly carboxymethylated. Demethylates the phosphatase PP2A catalytic subunit. This is Protein phosphatase methylesterase 1 (PPE1) from Debaryomyces hansenii (strain ATCC 36239 / CBS 767 / BCRC 21394 / JCM 1990 / NBRC 0083 / IGC 2968) (Yeast).